The chain runs to 210 residues: MIAARLRLSQWLSPSFPVSGYAYSHGLEQAISTGDIADAEDLLAWLQALLTSGACQADGVLVARAAAGDPLEPLCEAAEALAGSAERWSETRDQGAAFVSTTNALCDTALRPMPYPVAVGARARALGLPVGEVVALYLQAFLGNLISGAVRLIPLGQTEGQQVSQSLHPTISTQARCLATRPLSEIGTGAVRAELAAMAHETQEVRIFRT.

Belongs to the UreF family. UreD, UreF and UreG form a complex that acts as a GTP-hydrolysis-dependent molecular chaperone, activating the urease apoprotein by helping to assemble the nickel containing metallocenter of UreC. The UreE protein probably delivers the nickel.

It is found in the cytoplasm. Functionally, required for maturation of urease via the functional incorporation of the urease nickel metallocenter. This is Urease accessory protein UreF from Dinoroseobacter shibae (strain DSM 16493 / NCIMB 14021 / DFL 12).